The primary structure comprises 99 residues: MEIKILERKDNLVEIELINEDHSLPNLLKDILLTKEGVKMASYSIDHPLLHPETGRYISNPKITIITEEGTDPLEVLKEGLRDIIKMCDTLLDELKEKK.

The protein belongs to the archaeal Rpo11/eukaryotic RPB11/RPC19 RNA polymerase subunit family. As to quaternary structure, part of the RNA polymerase complex. Forms an Rpo3-Rpo10-Rpo11-Rpo12 complex upon coexpression.

It localises to the cytoplasm. The catalysed reaction is RNA(n) + a ribonucleoside 5'-triphosphate = RNA(n+1) + diphosphate. DNA-dependent RNA polymerase (RNAP) catalyzes the transcription of DNA into RNA using the four ribonucleoside triphosphates as substrates. The sequence is that of DNA-directed RNA polymerase subunit Rpo11 from Methanocaldococcus jannaschii (strain ATCC 43067 / DSM 2661 / JAL-1 / JCM 10045 / NBRC 100440) (Methanococcus jannaschii).